Consider the following 603-residue polypeptide: Elongation factor 4 (603 aa).

The 183-residue stretch at 2 to 184 (NHIRNFSIIA…AVVALIPAPK (183 aa)) folds into the tr-type G domain. GTP is bound by residues 14–19 (DHGKST) and 131–134 (NKMD).

Belongs to the TRAFAC class translation factor GTPase superfamily. Classic translation factor GTPase family. LepA subfamily.

The protein localises to the cell inner membrane. It carries out the reaction GTP + H2O = GDP + phosphate + H(+). Its function is as follows. Required for accurate and efficient protein synthesis under certain stress conditions. May act as a fidelity factor of the translation reaction, by catalyzing a one-codon backward translocation of tRNAs on improperly translocated ribosomes. Back-translocation proceeds from a post-translocation (POST) complex to a pre-translocation (PRE) complex, thus giving elongation factor G a second chance to translocate the tRNAs correctly. Binds to ribosomes in a GTP-dependent manner. In Polaromonas naphthalenivorans (strain CJ2), this protein is Elongation factor 4.